Here is a 537-residue protein sequence, read N- to C-terminus: Synaptotagmin-C (537 aa).

Topologically, residues 1 to 52 are vesicular; sequence MSGDGEDELCRNALALVNELCFSVRGNHNNEKCIEFSYLLRDRDRTRHIETD. A helical transmembrane segment spans residues 53-78; the sequence is ISVSLLSVIVTFCGIVLLGVSLFVSW. The Cytoplasmic segment spans residues 79–537; sequence KLCWIPWRDK…TIVVESPHSV (459 aa). Disordered stretches follow at residues 92–111 and 142–200; these read PQRRDSQHHPHQHLHHHHSH and IKLS…EFGT. Basic residues predominate over residues 100–110; the sequence is HPHQHLHHHHS. A compositionally biased stretch (polar residues) spans 143–174; sequence KLSQTSPDIPVDTSSGSKENNIPNAHSQQQVS. The interval 228-477 is phospholipid binding; the sequence is EAKKHQKVNC…VIGMCRVGNA (250 aa). C2 domains lie at 236-357 and 368-501; these read NCGR…TIWR and DLGE…EQWH. Positions 267, 273, 325, 326, 327, 330, 333, 399, 405, 459, and 461 each coordinate Ca(2+).

It belongs to the synaptotagmin family. As to quaternary structure, homodimer or homotrimer (possible). The cofactor is Ca(2+).

It localises to the cytoplasmic vesicle. The protein resides in the secretory vesicle. It is found in the synaptic vesicle membrane. Its subcellular location is the synapse. Functionally, may have a regulatory role in the membrane interactions during trafficking of synaptic vesicles at the active zone of the synapse. It binds acidic phospholipids with a specificity that requires the presence of both an acidic head group and a diacyl backbone. This chain is Synaptotagmin-C (P65-C), found in Diplobatis ommata (Ocellated electric ray).